Consider the following 1254-residue polypeptide: Vitamin B12-dependent ribonucleotide reductase (1254 aa).

Substrate contacts are provided by residues Ser-153, 198-199, Gly-230, 474-478, and 675-679; these read AC, NPCSE, and PTGTI. Cys-199 and Cys-487 are oxidised to a cystine. The active-site Proton acceptor is the Asn-474. The active-site Cysteine radical intermediate is Cys-476. The Proton acceptor role is filled by Glu-478.

Belongs to the ribonucleoside diphosphate reductase class-2 family. Adenosylcob(III)alamin is required as a cofactor.

It catalyses the reaction a 2'-deoxyribonucleoside 5'-diphosphate + [thioredoxin]-disulfide + H2O = a ribonucleoside 5'-diphosphate + [thioredoxin]-dithiol. Functionally, catalyzes the reduction of ribonucleotides to deoxyribonucleotides. May function to provide a pool of deoxyribonucleotide precursors for DNA repair during oxygen limitation and/or for immediate growth after restoration of oxygen. This is Vitamin B12-dependent ribonucleotide reductase (nrdJ) from Bradyrhizobium diazoefficiens (strain JCM 10833 / BCRC 13528 / IAM 13628 / NBRC 14792 / USDA 110).